A 446-amino-acid chain; its full sequence is Dual specificity mitogen-activated protein kinase kinase 2 (446 aa).

The segment covering 27 to 42 (SSGSSAGLGFQGQSQQ) has biased composition (low complexity). A disordered region spans residues 27–51 (SSGSSAGLGFQGQSQQHSTVNSMQG). Residues 149 to 414 (LKDLGEIGRG…YKELLKHPFI (266 aa)) enclose the Protein kinase domain. Residues 155 to 163 (IGRGAYGSV) and K178 contribute to the ATP site. The active-site Proton acceptor is the D276. Phosphoserine; by RAF is present on S304. The residue at position 308 (T308) is a Phosphothreonine; by RAF.

Belongs to the protein kinase superfamily. STE Ser/Thr protein kinase family. MAP kinase kinase subfamily. In terms of processing, MAPKK is itself dependent on Ser/Thr phosphorylation for activity catalyzed by MAP kinase kinase kinases. Expressed abundantly in the adult brain and muscle.

It carries out the reaction L-seryl-[protein] + ATP = O-phospho-L-seryl-[protein] + ADP + H(+). The enzyme catalyses L-threonyl-[protein] + ATP = O-phospho-L-threonyl-[protein] + ADP + H(+). It catalyses the reaction L-tyrosyl-[protein] + ATP = O-phospho-L-tyrosyl-[protein] + ADP + H(+). In terms of biological role, catalyzes the concomitant phosphorylation of a threonine and a tyrosine residue in a Thr-Glu-Tyr sequence located in MAP kinases. The polypeptide is Dual specificity mitogen-activated protein kinase kinase 2 (map2k2) (Xenopus laevis (African clawed frog)).